The sequence spans 378 residues: Beta sliding clamp (378 aa).

It belongs to the beta sliding clamp family. As to quaternary structure, forms a ring-shaped head-to-tail homodimer around DNA which binds and tethers DNA polymerases and other proteins to the DNA. The DNA replisome complex has a single clamp-loading complex (3 tau and 1 each of delta, delta', psi and chi subunits) which binds 3 Pol III cores (1 core on the leading strand and 2 on the lagging strand) each with a beta sliding clamp dimer. Additional proteins in the replisome are other copies of gamma, psi and chi, Ssb, DNA helicase and RNA primase.

The protein localises to the cytoplasm. Confers DNA tethering and processivity to DNA polymerases and other proteins. Acts as a clamp, forming a ring around DNA (a reaction catalyzed by the clamp-loading complex) which diffuses in an ATP-independent manner freely and bidirectionally along dsDNA. Initially characterized for its ability to contact the catalytic subunit of DNA polymerase III (Pol III), a complex, multichain enzyme responsible for most of the replicative synthesis in bacteria; Pol III exhibits 3'-5' exonuclease proofreading activity. The beta chain is required for initiation of replication as well as for processivity of DNA replication. The polypeptide is Beta sliding clamp (dnaN) (Streptococcus pneumoniae (strain ATCC BAA-255 / R6)).